We begin with the raw amino-acid sequence, 114 residues long: DNA-directed RNA polymerases II, IV and V subunit 9B (114 aa).

Zn(2+) contacts are provided by cysteine 7, cysteine 10, cysteine 29, cysteine 32, cysteine 76, cysteine 79, cysteine 103, and cysteine 108. A TFIIS-type zinc finger spans residues 72 to 113 (KAVRCAKCQHGEAVFFQATARGEEGMTLFFVCCNPNCSHRWR).

The protein belongs to the archaeal RpoM/eukaryotic RPA12/RPB9/RPC11 RNA polymerase family. As to quaternary structure, component of the RNA polymerase II, IV and V complexes. Interacts with NRPD1.

It localises to the nucleus. It is found in the nucleolus. Its function is as follows. DNA-dependent RNA polymerase catalyzes the transcription of DNA into RNA using the four ribonucleoside triphosphates as substrates. Component of RNA polymerase II which synthesizes mRNA precursors and many functional non-coding RNAs. Pol II is the central component of the basal RNA polymerase II transcription machinery. It is composed of mobile elements that move relative to each other. Component of RNA polymerases IV and V which mediate short-interfering RNAs (siRNA) accumulation and subsequent RNA-directed DNA methylation-dependent (RdDM) transcriptional gene silencing (TGS) of endogenous repeated sequences, including transposable elements. Required for RNA silencing. This Arabidopsis thaliana (Mouse-ear cress) protein is DNA-directed RNA polymerases II, IV and V subunit 9B (NRPB9B).